A 363-amino-acid polypeptide reads, in one-letter code: Peroxisomal (S)-2-hydroxyacid oxidase GLO4 (363 aa).

Positions methionine 1–glutamate 357 constitute an FMN hydroxy acid dehydrogenase domain. Residues proline 78–alanine 80, serine 107, glutamine 128–tyrosine 130, and threonine 156 contribute to the FMN site. Tyrosine 130 contacts a 2-oxocarboxylate. Residue arginine 165 participates in a 2-oxocarboxylate binding. FMN-binding residues include lysine 228 and serine 250. The Proton acceptor role is filled by histidine 252. Arginine 255 contacts a 2-oxocarboxylate. FMN contacts are provided by residues aspartate 283–arginine 287 and glycine 306–arginine 307. Positions serine 361–leucine 363 match the Microbody targeting signal motif.

Belongs to the FMN-dependent alpha-hydroxy acid dehydrogenase family. Homotetramer. The cofactor is FMN.

It localises to the peroxisome. The enzyme catalyses a (2S)-2-hydroxycarboxylate + O2 = a 2-oxocarboxylate + H2O2. The catalysed reaction is 2-hydroxydodecanoate + O2 = 2-oxododecanoate + H2O2. It catalyses the reaction 2-hydroxyhexanoate + O2 = 2-oxohexanoate + H2O2. It carries out the reaction 2-hydroxyoctanoate + O2 = 2-oxooctanoate + H2O2. The enzyme catalyses (S)-lactate + O2 = pyruvate + H2O2. The protein operates within lipid metabolism; fatty acid metabolism. Oxidase that catalyzes the oxidation of a broad range of 2-hydroxyacids to the corresponding 2-oxoacids, with a reduction of O2 to H2O2. Displays the highest activity with the long-chain fatty acid 2-hydroxydodecanoate and has intermediate activity with 2-hydroxyhexanoate, 2-hydroxyoctanote, and the short-chain hydroxyacid (S)-lactate (L-lactate). With much lower activity, it can also use glycolate, leucic acid, valic acid, and isoleucic acid as substrates in vitro. Cannot use 2-hydroxyhexadecanoate or D-lactate as substrates. May be involved in a general medium- and long-chain fatty acid catabolic pathway such as alpha-oxidation. In Arabidopsis thaliana (Mouse-ear cress), this protein is Peroxisomal (S)-2-hydroxyacid oxidase GLO4 (GLO4).